A 428-amino-acid polypeptide reads, in one-letter code: Nucleotidyltransferase MB21D2 (428 aa).

Positions 366-389 (QRRGSTTSIPSPQSDGGDPNQPDD) are disordered. Positions 368–379 (RGSTTSIPSPQS) are enriched in polar residues. At Thr372 the chain carries Phosphothreonine. Ser373, Ser376, and Ser379 each carry phosphoserine.

The protein belongs to the mab-21 family.

Probable nucleotidyltransferase that catalyzes the formation of cyclic dinucleotide second messenger in response to some unknown stimulus. This chain is Nucleotidyltransferase MB21D2, found in Mus musculus (Mouse).